A 519-amino-acid polypeptide reads, in one-letter code: Tachykinin-like peptides receptor 99D (519 aa).

Residues 1–100 (MENRSDFEAD…SFAFVVPWWR (100 aa)) lie on the Extracellular side of the membrane. Residues asparagine 3, asparagine 19, asparagine 22, and asparagine 61 are each glycosylated (N-linked (GlcNAc...) asparagine). A helical transmembrane segment spans residues 101 to 123 (QVLWSILFGGMVIVATGGNLIVV). At 124–134 (WIVMTTKRMRT) the chain is on the cytoplasmic side. A helical transmembrane segment spans residues 135-155 (VTNYFIVNLSIADAMVSSLNV). Residues 156 to 175 (TFNYYYMLDSDWPFGEFYCK) lie on the Extracellular side of the membrane. An intrachain disulfide couples cysteine 174 to cysteine 254. The helical transmembrane segment at 176–197 (LSQFIAMLSICASVFTLMAISI) threads the bilayer. The Cytoplasmic portion of the chain corresponds to 198–217 (DRYVAIIRPLQPRMSKRCNL). Residues 218 to 238 (AIAAVIWLASTLISCPMMIIY) traverse the membrane as a helical segment. Residues 239 to 270 (RTEEVPVRGLSNRTVCYPEWPDGPTNHSTMES) lie on the Extracellular side of the membrane. A helical transmembrane segment spans residues 271 to 292 (LYNILIIILTYFLPIVSMTVTY). Residues 293–324 (SRVGIELWGSKTIGECTPRQVENVRSKRRVVK) are Cytoplasmic-facing. Residues 325 to 346 (MMIVVVLIFAICWLPFHSYFII) form a helical membrane-spanning segment. The Extracellular segment spans residues 347–361 (TSCYPAITEAPFIQE). A helical transmembrane segment spans residues 362–384 (LYLAIYWLAMSNSMYNPIIYCWM). Topologically, residues 385–519 (NSRFRYGFKM…STANTTQLLS (135 aa)) are cytoplasmic. Cysteine 399 is lipidated: S-palmitoyl cysteine. The disordered stretch occupies residues 444–519 (PSSPKSHRIS…STANTTQLLS (76 aa)). Composition is skewed to polar residues over residues 454–465 (HSGTGRSATLRN) and 487–499 (SYQQ…WSGP). The segment covering 500–519 (NSATAVTNSSSTANTTQLLS) has biased composition (low complexity).

This sequence belongs to the G-protein coupled receptor 1 family. In terms of tissue distribution, during late embryogenesis (stages 11-15), expressed in the brain and in a specific subset of neurons in each neuromere of the developing ventral ganglion. Expressed in the cortex of the adult brain, which contains the neuronal cell bodies.

It is found in the cell membrane. In terms of biological role, receptor for tachykinin-like peptides. This Drosophila melanogaster (Fruit fly) protein is Tachykinin-like peptides receptor 99D (TkR99D).